The sequence spans 311 residues: F-box protein At3g18320 (311 aa).

The region spanning 1-46 (MTLPELPKDLVEEILCFVPATSLKRLRSTCKGWNRLFKDDKRFARK) is the F-box domain.

The protein is F-box protein At3g18320 of Arabidopsis thaliana (Mouse-ear cress).